Consider the following 2207-residue polypeptide: Desmoplakin-B (2207 aa).

3 coiled-coil regions span residues 506-916, 952-1000, and 1029-1063; these read MEEL…EAGK, AKHA…EQGR, and TERLQRLTETLTKDRQRVEEELRAVRLEHEELLKN. The segment covering 905–924 has biased composition (basic and acidic residues); sequence KQRQVAEEEAGKRRRTESQL. The segment at 905–933 is disordered; the sequence is KQRQVAEEEAGKRRRTESQLEKSSQAMRE. Plectin repeat units lie at residues 1369 to 1406, 1407 to 1445, 1446 to 1483, 1571 to 1609, 1610 to 1647, 1685 to 1723, 1783 to 1811, 1992 to 2029, and 2068 to 2106; these read LLEAQAATGYIIDPQANTKMTVEEACLNGVVDEADKKQ, LLIAEAACVGFRDPKTAKLLPVSQAMKKGIIDRETTLRL, LQAQEAAGGILDPILSVYLPKDTAMDRDLVDEDLYQAL, YLRGSTCIAGIYDEAGECTLPIYQAMKNGLLRPGTTLEL, LEAQAASGFVIDPINNEYYTVEEACQKGLVGVEFKDKL, LLEAQIASGGIIDPKHSHRIDVDVAYQRGYFDQGMNQIL, IVDPDSNKEMTVREAYEKKLIDYETFLEL, LLEAQACTGGIVSPDNGRRMSIQEATRVGVLDDEMANR, and FLEFQYLTGGLFDPELGCRRSLEEALQMGWLDMRAAQRL. Residues 2155–2164 are compositionally biased toward polar residues; it reads ISSPYNLSNP. A disordered region spans residues 2155–2207; the sequence is ISSPYNLSNPGSASGSRSGSRRGSVDYSLSPSSSSRYSSFSYSRTSFSSRSLS. Over residues 2165–2207 the composition is skewed to low complexity; it reads GSASGSRSGSRRGSVDYSLSPSSSSRYSSFSYSRTSFSSRSLS.

Belongs to the plakin or cytolinker family.

It is found in the cell junction. The protein localises to the desmosome. It localises to the cell membrane. Involved in the organization of desmosome cell-cell junctions. Of particular importance in cell adhesion in the skin and during cardiac development. May also play a role in the regulation of Wnt, TGF-beta and Hippo signaling pathways. In Danio rerio (Zebrafish), this protein is Desmoplakin-B.